The following is a 359-amino-acid chain: Guanine nucleotide-binding protein subunit alpha-11 (359 aa).

S-palmitoyl cysteine attachment occurs at residues cysteine 9 and cysteine 10. A G-alpha domain is found at arginine 38–valine 359. The interval lysine 41–threonine 54 is G1 motif. GTP-binding positions include glycine 46–serine 53 and leucine 180–arginine 183. Residue serine 53 participates in Mg(2+) binding. Residues aspartate 178–threonine 186 are G2 motif. Residue threonine 186 participates in Mg(2+) binding. The segment at phenylalanine 201–arginine 210 is G3 motif. Deamidated glutamine; by Photorhabdus PAU_02230 is present on glutamine 209. Positions isoleucine 270–aspartate 277 are G4 motif. GTP-binding positions include asparagine 274–aspartate 277 and alanine 331. Residues threonine 329–threonine 334 are G5 motif.

It belongs to the G-alpha family. G(q) subfamily. As to quaternary structure, g proteins are composed of 3 units; alpha, beta and gamma. The alpha chain contains the guanine nucleotide binding site. Interacts with RGS22. Interacts with NTSR1. (Microbial infection) Interacts with human cytomegalovirus (HHV-5) US28. (Microbial infection) Deamidated at Gln-209 by Photorhabdus asymbiotica toxin PAU_02230, blocking GTP hydrolysis of heterotrimeric GNAQ or GNA11 and G-alphai (GNAI1, GNAI2 or GNAI3) proteins, thereby activating RhoA. As to expression, expressed in testis.

Its subcellular location is the cell membrane. It is found in the cytoplasm. The catalysed reaction is GTP + H2O = GDP + phosphate + H(+). Guanine nucleotide-binding proteins (G proteins) function as transducers downstream of G protein-coupled receptors (GPCRs) in numerous signaling cascades. The alpha chain contains the guanine nucleotide binding site and alternates between an active, GTP-bound state and an inactive, GDP-bound state. Signaling by an activated GPCR promotes GDP release and GTP binding. The alpha subunit has a low GTPase activity that converts bound GTP to GDP, thereby terminating the signal. Both GDP release and GTP hydrolysis are modulated by numerous regulatory proteins. Signaling is mediated via phospholipase C-beta-dependent inositol lipid hydrolysis for signal propagation: activates phospholipase C-beta: following GPCR activation, GNA11 activates PLC-beta (PLCB1, PLCB2, PLCB3 or PLCB4), leading to production of diacylglycerol (DAG) and inositol 1,4,5-trisphosphate (IP3). Transduces FFAR4 signaling in response to long-chain fatty acids (LCFAs). Together with GNAQ, required for heart development. In the respiratory epithelium, transmits OXGR1-dependent signals that lead to downstream intracellular Ca(2+) release and mucocilliary clearance of airborne pathogens. This chain is Guanine nucleotide-binding protein subunit alpha-11 (GNA11), found in Homo sapiens (Human).